The chain runs to 377 residues: Phosphatidylglycerol--prolipoprotein diacylglyceryl transferase (377 aa).

4 helical membrane-spanning segments follow: residues 18-38 (PVPLRAYALMIIIGIVVAVVV), 48-68 (MDPALAGEIAYWAVPFGIVGA), 93-113 (IWNGGLGIWGAIAGGALGAWL), and 119-139 (GISLALFADAAAPGIILAQAI). Arginine 141 lines the a 1,2-diacyl-sn-glycero-3-phospho-(1'-sn-glycerol) pocket. 3 helical membrane-spanning segments follow: residues 177–197 (QPTFLYEFLWNLVVAAILLLV), 208–228 (LFALYVALYTFGRLWIEMLRI), and 238–258 (RVNIWTSAIVCVGAVVALLVV). Positions 265–377 (DVSPQEQRAL…RTRVERPPAT (113 aa)) are disordered. 2 stretches are compositionally biased toward low complexity: residues 288 to 297 (AAGETAGETR) and 308 to 344 (GVDVNGADVDGADPSNVNGANVNGADPVNVNVNDADG).

The protein belongs to the Lgt family.

Its subcellular location is the cell membrane. The enzyme catalyses L-cysteinyl-[prolipoprotein] + a 1,2-diacyl-sn-glycero-3-phospho-(1'-sn-glycerol) = an S-1,2-diacyl-sn-glyceryl-L-cysteinyl-[prolipoprotein] + sn-glycerol 1-phosphate + H(+). Its pathway is protein modification; lipoprotein biosynthesis (diacylglyceryl transfer). In terms of biological role, catalyzes the transfer of the diacylglyceryl group from phosphatidylglycerol to the sulfhydryl group of the N-terminal cysteine of a prolipoprotein, the first step in the formation of mature lipoproteins. This chain is Phosphatidylglycerol--prolipoprotein diacylglyceryl transferase, found in Frankia alni (strain DSM 45986 / CECT 9034 / ACN14a).